We begin with the raw amino-acid sequence, 354 residues long: MHQYQIHWVEHSEVKILSNIVVRLEYKERGVKSITNRRARHDAVSESKSIDYSGKKHIALVAGGMSAEREVSLVSSKGVSKALIALGYKVTFIDMGADIAFKLQEIKPDIVFNCLHGTYGEDGCLSGLLNIMRIPYTHSGVLSSALAFDKIYSRSWFLTNNINMAESIVVNKSDNIKIEPMKRPYVIKPITQGSSIGIEVIFEEDDFNFANYDFPYGDQVIIEKYIKGRELQVAVLNGKALGVLEIKLLKNRFYDYETKYTEGFAEHLCPAPIPTNLYDKLLIESEKIYKTMNCKGPARVEFLLEDQTNKLYALEINTHPGMTPLSIVPEIAAYAGINFTNLIEEIIKAASFES.

The ATP-grasp domain maps to R154 to K348. M181–Q232 contributes to the ATP binding site. Mg(2+) contacts are provided by E301, E315, and N317.

The protein belongs to the D-alanine--D-alanine ligase family. Requires Mg(2+) as cofactor. Mn(2+) is required as a cofactor.

It localises to the cytoplasm. The catalysed reaction is 2 D-alanine + ATP = D-alanyl-D-alanine + ADP + phosphate + H(+). Its pathway is cell wall biogenesis; peptidoglycan biosynthesis. Functionally, cell wall formation. The chain is D-alanine--D-alanine ligase from Rickettsia canadensis (strain McKiel).